The primary structure comprises 147 residues: Cyanate hydratase (147 aa).

Active-site residues include arginine 88, glutamate 91, and serine 114.

Belongs to the cyanase family.

It catalyses the reaction cyanate + hydrogencarbonate + 3 H(+) = NH4(+) + 2 CO2. In terms of biological role, catalyzes the reaction of cyanate with bicarbonate to produce ammonia and carbon dioxide. This is Cyanate hydratase from Ralstonia pickettii (strain 12J).